A 154-amino-acid polypeptide reads, in one-letter code: 8-oxo-dGTP diphosphatase (154 aa).

Positions 1-129 (MPQLATICYI…DHTFVEWLLE (129 aa)) constitute a Nudix hydrolase domain. 4 residues coordinate Mg(2+): Gly38, Glu53, Glu56, and Glu57. The short motif at 38-59 (GKLERGETPQECAAREILEETG) is the Nudix box element.

Belongs to the Nudix hydrolase family. As to quaternary structure, homotrimer. Mg(2+) is required as a cofactor.

The enzyme catalyses 8-oxo-dGTP + H2O = 8-oxo-dGMP + diphosphate + H(+). In terms of biological role, involved in the DNA repair system to avoid A.T to G.C transversions. Degrades 8-oxo-dGTP to the monophosphate, but is also active on all of the nucleoside triphosphates. The polypeptide is 8-oxo-dGTP diphosphatase (mutX) (Streptococcus pneumoniae serotype 4 (strain ATCC BAA-334 / TIGR4)).